The following is a 239-amino-acid chain: tRNA (guanine-N(7)-)-methyltransferase (239 aa).

Glu69, Glu94, Asp121, and Asp144 together coordinate S-adenosyl-L-methionine. Asp144 is an active-site residue. A substrate-binding site is contributed by Lys148. The interval 150-155 (RHNKRR) is interaction with RNA. Substrate contacts are provided by residues Asp180 and 217–220 (TKFE).

Belongs to the class I-like SAM-binding methyltransferase superfamily. TrmB family. Monomer.

The catalysed reaction is guanosine(46) in tRNA + S-adenosyl-L-methionine = N(7)-methylguanosine(46) in tRNA + S-adenosyl-L-homocysteine. It participates in tRNA modification; N(7)-methylguanine-tRNA biosynthesis. Catalyzes the formation of N(7)-methylguanine at position 46 (m7G46) in tRNA. The polypeptide is tRNA (guanine-N(7)-)-methyltransferase (Escherichia coli O6:K15:H31 (strain 536 / UPEC)).